A 483-amino-acid polypeptide reads, in one-letter code: MFS-type transporter hepF (483 aa).

The disordered stretch occupies residues 1–31; it reads METPAGKADRPRDHDSEQSQDNVVSWEGEDD. A compositionally biased stretch (basic and acidic residues) spans 7 to 17; sequence KADRPRDHDSE. Helical transmembrane passes span 89–109, 124–144, 147–167, 179–199, 206–226, 276–296, 311–331, 357–377, 385–405, 416–436, and 448–468; these read TIVV…AAPI, ILYT…MLIV, FFAG…VADL, FVTL…GFLT, WVFW…ILFT, PISL…YVLV, IGIS…GLWI, PMMI…GWSV, MPIV…MPMV, AASA…VLPL, and GWGN…LIAI.

Belongs to the major facilitator superfamily.

It is found in the cell membrane. Functionally, MFS-type transporter; part of the gene cluster that mediates the biosynthesis of heptelidic acid (HA), a sesquiterpene lactone that acts as an inhibitor of glyceraldehyde-3-phosphatedehydrogenase (GAPDH) and a growth inhibitor of the salt-tolerant lactic acid bacteria in soy sauce brewing. Might be required for efficient secretion of heptelidic acid. The sequence is that of MFS-type transporter hepF (hepF) from Aspergillus oryzae (strain ATCC 42149 / RIB 40) (Yellow koji mold).